A 275-amino-acid polypeptide reads, in one-letter code: Sulfur carrier protein FdhD (275 aa).

Catalysis depends on Cys-121, which acts as the Cysteine persulfide intermediate. Residue 258 to 263 (FSKPGR) participates in Mo-bis(molybdopterin guanine dinucleotide) binding.

It belongs to the FdhD family.

The protein localises to the cytoplasm. Required for formate dehydrogenase (FDH) activity. Acts as a sulfur carrier protein that transfers sulfur from IscS to the molybdenum cofactor prior to its insertion into FDH. The sequence is that of Sulfur carrier protein FdhD from Yersinia enterocolitica serotype O:8 / biotype 1B (strain NCTC 13174 / 8081).